The primary structure comprises 379 residues: Homoserine O-succinyltransferase (379 aa).

Positions 48 to 357 (NAVLICHALS…SAHGHDAFLM (310 aa)) constitute an AB hydrolase-1 domain. Ser154 functions as the Nucleophile in the catalytic mechanism. Arg224 contacts substrate. Residues Asp319 and His352 contribute to the active site. Residue Asp353 participates in substrate binding.

Belongs to the AB hydrolase superfamily. MetX family. As to quaternary structure, homodimer.

Its subcellular location is the cytoplasm. It catalyses the reaction L-homoserine + succinyl-CoA = O-succinyl-L-homoserine + CoA. It functions in the pathway amino-acid biosynthesis; L-methionine biosynthesis via de novo pathway; O-succinyl-L-homoserine from L-homoserine: step 1/1. With respect to regulation, activity increases in the presence of MetW. Functionally, transfers a succinyl group from succinyl-CoA to L-homoserine, forming succinyl-L-homoserine. This chain is Homoserine O-succinyltransferase, found in Neisseria gonorrhoeae.